A 257-amino-acid polypeptide reads, in one-letter code: Trans-aconitate 2-methyltransferase (257 aa).

This sequence belongs to the methyltransferase superfamily. Tam family.

Its subcellular location is the cytoplasm. It catalyses the reaction trans-aconitate + S-adenosyl-L-methionine = (E)-3-(methoxycarbonyl)pent-2-enedioate + S-adenosyl-L-homocysteine. In terms of biological role, catalyzes the S-adenosylmethionine monomethyl esterification of trans-aconitate. The chain is Trans-aconitate 2-methyltransferase from Sinorhizobium medicae (strain WSM419) (Ensifer medicae).